An 87-amino-acid chain; its full sequence is Envelope glycoprotein N (87 aa).

An N-terminal signal peptide occupies residues 1–24 (MGSITASFILITMQILFFCEDSSG). At 25–48 (EPNFAERNFWHASCSARGVYIDGS) the chain is on the virion surface side. Residues 49 to 69 (MITTLFFYASLLGVCVALISL) form a helical membrane-spanning segment. The Intravirion portion of the chain corresponds to 70–87 (AYHACFRLFTRSVLRSTW).

This sequence belongs to the herpesviridae glycoprotein N family. As to quaternary structure, interacts (via N-terminus) with gM (via N-terminus). The gM-gN heterodimer forms the gCII complex.

The protein localises to the virion membrane. The protein resides in the host membrane. It localises to the host Golgi apparatus. It is found in the host trans-Golgi network. Functionally, envelope glycoprotein necessary for proper maturation of gM and modulation of its membrane fusion activity. Also plays a critical role in virion morphogenesis. The protein is Envelope glycoprotein N of Varicella-zoster virus (strain Dumas) (HHV-3).